The primary structure comprises 121 residues: Large ribosomal subunit protein eL34B (121 aa).

Belongs to the eukaryotic ribosomal protein eL34 family. Component of the large ribosomal subunit (LSU). Mature yeast ribosomes consist of a small (40S) and a large (60S) subunit. The 40S small subunit contains 1 molecule of ribosomal RNA (18S rRNA) and 33 different proteins (encoded by 57 genes). The large 60S subunit contains 3 rRNA molecules (25S, 5.8S and 5S rRNA) and 46 different proteins (encoded by 81 genes).

It is found in the cytoplasm. Functionally, component of the ribosome, a large ribonucleoprotein complex responsible for the synthesis of proteins in the cell. The small ribosomal subunit (SSU) binds messenger RNAs (mRNAs) and translates the encoded message by selecting cognate aminoacyl-transfer RNA (tRNA) molecules. The large subunit (LSU) contains the ribosomal catalytic site termed the peptidyl transferase center (PTC), which catalyzes the formation of peptide bonds, thereby polymerizing the amino acids delivered by tRNAs into a polypeptide chain. The nascent polypeptides leave the ribosome through a tunnel in the LSU and interact with protein factors that function in enzymatic processing, targeting, and the membrane insertion of nascent chains at the exit of the ribosomal tunnel. The sequence is that of Large ribosomal subunit protein eL34B from Saccharomyces cerevisiae (strain ATCC 204508 / S288c) (Baker's yeast).